Here is a 398-residue protein sequence, read N- to C-terminus: Transcription termination factor 1, mitochondrial (398 aa).

The transit peptide at Met1 to Leu57 directs the protein to the mitochondrion. 5 interaction with DNA regions span residues Arg169–Ser170, Gln246–Arg250, Ala323–Lys330, Ser354–Thr357, and Ser383–Lys390.

This sequence belongs to the mTERF family. As to quaternary structure, monomer. In terms of processing, phosphoprotein with mostly four phosphate groups. While the DNA-binding activity is unaffected by the phosphorylation state, only the phosphorylated form of the protein is active for termination activity. Functioning seems to be regulated by phosphorylation.

It is found in the mitochondrion. Functionally, transcription termination factor. Binds to a 28 bp region within the tRNA(Leu(uur)) gene at a position immediately adjacent to and downstream of the 16S rRNA gene; this region comprises a tridecamer sequence critical for directing accurate termination. Binds DNA along the major grove and promotes DNA bending and partial unwinding. Promotes base flipping. Transcription termination activity appears to be polarized with highest specificity for transcripts initiated on the light strand. The polypeptide is Transcription termination factor 1, mitochondrial (MTERF1) (Pongo abelii (Sumatran orangutan)).